The sequence spans 461 residues: L-seryl-tRNA(Sec) selenium transferase (461 aa).

At Lys-294 the chain carries N6-(pyridoxal phosphate)lysine.

The protein belongs to the SelA family. Pyridoxal 5'-phosphate is required as a cofactor.

It localises to the cytoplasm. It carries out the reaction L-seryl-tRNA(Sec) + selenophosphate + H(+) = L-selenocysteinyl-tRNA(Sec) + phosphate. It participates in aminoacyl-tRNA biosynthesis; selenocysteinyl-tRNA(Sec) biosynthesis; selenocysteinyl-tRNA(Sec) from L-seryl-tRNA(Sec) (bacterial route): step 1/1. Its function is as follows. Converts seryl-tRNA(Sec) to selenocysteinyl-tRNA(Sec) required for selenoprotein biosynthesis. The protein is L-seryl-tRNA(Sec) selenium transferase of Actinobacillus pleuropneumoniae serotype 5b (strain L20).